Consider the following 771-residue polypeptide: Carnitine O-palmitoyltransferase 1, muscle isoform (771 aa).

Residues 1-47 (MAEAHQAVAFQFTVTPEGVDFQLSREVLKHIYLSVIRSWKKRLIRIK) are Cytoplasmic-facing. A helical transmembrane segment spans residues 48–73 (NGILRGVYPGSPTSWLVVVMATAGSS). At 74–101 (YYNVDISMGLVYYIQRWLPEGRPYRTPY) the chain is on the mitochondrial intermembrane side. Residues 102–121 (TRTLFSMAIFSTGVWMMGIF) form a helical membrane-spanning segment. The Cytoplasmic portion of the chain corresponds to 122-771 (FFRQTLKLLL…NLFQVPKADG (650 aa)). His472 functions as the Proton acceptor in the catalytic mechanism. 554 to 566 (GKGLIKKCRTSPD) serves as a coordination point for CoA. Positions 588 and 601 each coordinate (R)-carnitine.

Belongs to the carnitine/choline acetyltransferase family.

Its subcellular location is the mitochondrion outer membrane. It catalyses the reaction (R)-carnitine + hexadecanoyl-CoA = O-hexadecanoyl-(R)-carnitine + CoA. The protein operates within lipid metabolism; fatty acid beta-oxidation. In terms of biological role, catalyzes the transfer of the acyl group of long-chain fatty acid-CoA conjugates onto carnitine, an essential step for the mitochondrial uptake of long-chain fatty acids and their subsequent beta-oxidation in the mitochondrion. The sequence is that of Carnitine O-palmitoyltransferase 1, muscle isoform (CPT1B) from Bos taurus (Bovine).